The chain runs to 156 residues: MGRSISVSFGLLVVFLSLSGTGADQDCLPGWSSHEGHCYKVFNLDKTWEDAEKFCTEQANSRHLVSIDSKKEANFVAELVSQNIKETRRTDFVWIGLRAEDKRQHCSSEWSDGSSINYQNWIEAESKKCLGLEKQTRYRKWVNLNCGQPYRFTCEI.

Positions 1-23 are cleaved as a signal peptide; it reads MGRSISVSFGLLVVFLSLSGTGA. Intrachain disulfides connect Cys27–Cys38, Cys55–Cys154, and Cys129–Cys146. The 122-residue stretch at 34 to 155 folds into the C-type lectin domain; the sequence is HEGHCYKVFN…CGQPYRFTCE (122 aa).

Belongs to the snaclec family. As to quaternary structure, heterodimer; disulfide-linked. As to expression, expressed by the venom gland.

Its subcellular location is the secreted. Interferes with one step of hemostasis (modulation of platelet aggregation, or coagulation cascade, for example). The chain is Snaclec A3 from Macrovipera lebetinus (Levantine viper).